The sequence spans 344 residues: Eukaryotic translation initiation factor 2 subunit alpha (344 aa).

The S1 motif domain occupies 21-92; it reads DMAVMIQVKT…ERGYIDLSKR (72 aa). The residue at position 56 (Ser56) is a Phosphoserine; by GCN2. The tract at residues 309–344 is disordered; that stretch reads LRMDNEEMSGDEGSEDEEEDTGMGEVDIDGGSGIIE. Over residues 314–336 the composition is skewed to acidic residues; the sequence is EEMSGDEGSEDEEEDTGMGEVDI. 2 positions are modified to phosphoserine; by CK2: Ser317 and Ser322.

It belongs to the eIF-2-alpha family. Eukaryotic translation initiation factor 2 eIF2 is a heterotrimeric complex composed of an alpha, a beta and a gamma subunit. Phosphorylated at Ser-56 by GCN2. Phosphorylated at Ser-317 and Ser-322 by CK2.

The protein resides in the cytoplasm. Its subcellular location is the cytosol. Functions in the early steps of protein synthesis by forming a ternary complex with GTP and initiator tRNA. This complex binds to a 40S ribosomal subunit, followed by mRNA binding to form a 43S pre-initiation complex. Junction of the 60S ribosomal subunit to form the 80S initiation complex is preceded by hydrolysis of the GTP bound to eIF-2 and release of an eIF-2-GDP binary complex. In order for eIF-2 to recycle and catalyze another round of initiation, the GDP bound to eIF-2 must exchange with GTP by way of a reaction catalyzed by eIF2B. This chain is Eukaryotic translation initiation factor 2 subunit alpha, found in Arabidopsis thaliana (Mouse-ear cress).